The sequence spans 529 residues: Lanosterol 14-alpha demethylase (529 aa).

Residue C468 participates in heme binding.

It belongs to the cytochrome P450 family. Heme is required as a cofactor.

Its subcellular location is the membrane. It catalyses the reaction a 14alpha-methyl steroid + 3 reduced [NADPH--hemoprotein reductase] + 3 O2 = a Delta(14) steroid + formate + 3 oxidized [NADPH--hemoprotein reductase] + 4 H2O + 4 H(+). The enzyme catalyses a 14alpha-methyl steroid + reduced [NADPH--hemoprotein reductase] + O2 = a 14alpha-hydroxymethyl steroid + oxidized [NADPH--hemoprotein reductase] + H2O + H(+). The catalysed reaction is a 14alpha-hydroxymethyl steroid + reduced [NADPH--hemoprotein reductase] + O2 = a 14alpha-formyl steroid + oxidized [NADPH--hemoprotein reductase] + 2 H2O + H(+). It carries out the reaction a 14alpha-formyl steroid + reduced [NADPH--hemoprotein reductase] + O2 = a Delta(14) steroid + formate + oxidized [NADPH--hemoprotein reductase] + H2O + 2 H(+). It catalyses the reaction lanosterol + 3 reduced [NADPH--hemoprotein reductase] + 3 O2 = 4,4-dimethyl-5alpha-cholesta-8,14,24-trien-3beta-ol + formate + 3 oxidized [NADPH--hemoprotein reductase] + 4 H2O + 4 H(+). The enzyme catalyses lanosterol + reduced [NADPH--hemoprotein reductase] + O2 = 32-hydroxylanosterol + oxidized [NADPH--hemoprotein reductase] + H2O + H(+). The catalysed reaction is 32-hydroxylanosterol + reduced [NADPH--hemoprotein reductase] + O2 = 32-oxolanosterol + oxidized [NADPH--hemoprotein reductase] + 2 H2O + H(+). It carries out the reaction 32-oxolanosterol + reduced [NADPH--hemoprotein reductase] + O2 = 4,4-dimethyl-5alpha-cholesta-8,14,24-trien-3beta-ol + formate + oxidized [NADPH--hemoprotein reductase] + H2O + 2 H(+). It catalyses the reaction eburicol + 3 reduced [NADPH--hemoprotein reductase] + 3 O2 = 14-demethyleburicol + formate + 3 oxidized [NADPH--hemoprotein reductase] + 4 H2O + 4 H(+). The enzyme catalyses eburicol + reduced [NADPH--hemoprotein reductase] + O2 = 32-hydroxyeburicol + oxidized [NADPH--hemoprotein reductase] + H2O + H(+). The catalysed reaction is 32-hydroxyeburicol + reduced [NADPH--hemoprotein reductase] + O2 = 32-oxoeburicol + oxidized [NADPH--hemoprotein reductase] + 2 H2O + H(+). It carries out the reaction 32-oxoeburicol + reduced [NADPH--hemoprotein reductase] + O2 = 14-demethyleburicol + formate + oxidized [NADPH--hemoprotein reductase] + H2O + 2 H(+). It participates in steroid biosynthesis; zymosterol biosynthesis; zymosterol from lanosterol: step 1/6. Its function is as follows. Sterol 14alpha-demethylase that plays a critical role in the third module of ergosterol biosynthesis pathway, being ergosterol the major sterol component in fungal membranes that participates in a variety of functions. The third module or late pathway involves the ergosterol synthesis itself through consecutive reactions that mainly occur in the endoplasmic reticulum (ER) membrane. In filamentous fungi, during the initial step of this module, lanosterol (lanosta-8,24-dien-3beta-ol) can be metabolized to eburicol. Sterol 14alpha-demethylase catalyzes the three-step oxidative removal of the 14alpha-methyl group (C-32) of both these sterols in the form of formate, and converts eburicol and lanosterol to 14-demethyleburicol (4,4,24-trimethylergosta-8,14,24(28)-trienol) and 4,4-dimethyl-5alpha-cholesta-8,14,24-trien-3beta-ol, respectively, which are further metabolized by other enzymes in the pathway to ergosterol. Can also use substrates not intrinsic to fungi, such as 24,25-dihydrolanosterol (DHL), producing 4,4-dimethyl-8,14-cholestadien-3-beta-ol, but at lower rates than the endogenous substrates. The protein is Lanosterol 14-alpha demethylase (ERG11) of Eremothecium gossypii (strain ATCC 10895 / CBS 109.51 / FGSC 9923 / NRRL Y-1056) (Yeast).